The chain runs to 347 residues: Phosphoribosylformylglycinamidine cyclo-ligase (347 aa).

Belongs to the AIR synthase family.

It is found in the cytoplasm. The catalysed reaction is 2-formamido-N(1)-(5-O-phospho-beta-D-ribosyl)acetamidine + ATP = 5-amino-1-(5-phospho-beta-D-ribosyl)imidazole + ADP + phosphate + H(+). Its pathway is purine metabolism; IMP biosynthesis via de novo pathway; 5-amino-1-(5-phospho-D-ribosyl)imidazole from N(2)-formyl-N(1)-(5-phospho-D-ribosyl)glycinamide: step 2/2. The polypeptide is Phosphoribosylformylglycinamidine cyclo-ligase (Hydrogenovibrio crunogenus (strain DSM 25203 / XCL-2) (Thiomicrospira crunogena)).